Here is a 192-residue protein sequence, read N- to C-terminus: Putative BTB/POZ domain-containing protein At4g04090 (192 aa).

The BTB domain occupies 23 to 96; the sequence is VDVRLMARDS…TYSDGSMLSE (74 aa).

The protein operates within protein modification; protein ubiquitination. Its function is as follows. May act as a substrate-specific adapter of an E3 ubiquitin-protein ligase complex (CUL3-RBX1-BTB) which mediates the ubiquitination and subsequent proteasomal degradation of target proteins. The protein is Putative BTB/POZ domain-containing protein At4g04090 of Arabidopsis thaliana (Mouse-ear cress).